The primary structure comprises 899 residues: UPF0182 protein Mhun_1303 (899 aa).

A run of 7 helical transmembrane segments spans residues 6 to 26, 39 to 59, 93 to 113, 136 to 156, 196 to 216, 240 to 260, and 271 to 291; these read LLIFIPAAVILLFFLLTDLLS, VFLTILITSAALFVIGTLLFF, VAAGITGLSLSSSWEIILAFL, LPFYTILIQYLLALFVFTLII, FLPQVNCLLFLIFTTLAAFLW, ITIPALTILTVIAFLIGLLFL, and IAYGIGGFFIIAILSAGAGFL.

Belongs to the UPF0182 family.

It is found in the cell membrane. This chain is UPF0182 protein Mhun_1303, found in Methanospirillum hungatei JF-1 (strain ATCC 27890 / DSM 864 / NBRC 100397 / JF-1).